The chain runs to 362 residues: Phosphoserine aminotransferase (362 aa).

Positions 9 and 42 each coordinate L-glutamate. Pyridoxal 5'-phosphate contacts are provided by residues Gly76 to Arg77, Trp102, Thr153, Asp174, and Gln197. Lys198 is modified (N6-(pyridoxal phosphate)lysine). Asn239–Thr240 is a binding site for pyridoxal 5'-phosphate.

The protein belongs to the class-V pyridoxal-phosphate-dependent aminotransferase family. SerC subfamily. As to quaternary structure, homodimer. The cofactor is pyridoxal 5'-phosphate.

The protein resides in the cytoplasm. The catalysed reaction is O-phospho-L-serine + 2-oxoglutarate = 3-phosphooxypyruvate + L-glutamate. It carries out the reaction 4-(phosphooxy)-L-threonine + 2-oxoglutarate = (R)-3-hydroxy-2-oxo-4-phosphooxybutanoate + L-glutamate. Its pathway is amino-acid biosynthesis; L-serine biosynthesis; L-serine from 3-phospho-D-glycerate: step 2/3. The protein operates within cofactor biosynthesis; pyridoxine 5'-phosphate biosynthesis; pyridoxine 5'-phosphate from D-erythrose 4-phosphate: step 3/5. In terms of biological role, catalyzes the reversible conversion of 3-phosphohydroxypyruvate to phosphoserine and of 3-hydroxy-2-oxo-4-phosphonooxybutanoate to phosphohydroxythreonine. This chain is Phosphoserine aminotransferase, found in Enterobacter sp. (strain 638).